Here is a 235-residue protein sequence, read N- to C-terminus: Phosphoribosylaminoimidazole-succinocarboxamide synthase (235 aa).

Belongs to the SAICAR synthetase family.

The catalysed reaction is 5-amino-1-(5-phospho-D-ribosyl)imidazole-4-carboxylate + L-aspartate + ATP = (2S)-2-[5-amino-1-(5-phospho-beta-D-ribosyl)imidazole-4-carboxamido]succinate + ADP + phosphate + 2 H(+). Its pathway is purine metabolism; IMP biosynthesis via de novo pathway; 5-amino-1-(5-phospho-D-ribosyl)imidazole-4-carboxamide from 5-amino-1-(5-phospho-D-ribosyl)imidazole-4-carboxylate: step 1/2. In Chlorobaculum tepidum (strain ATCC 49652 / DSM 12025 / NBRC 103806 / TLS) (Chlorobium tepidum), this protein is Phosphoribosylaminoimidazole-succinocarboxamide synthase.